A 200-amino-acid polypeptide reads, in one-letter code: Phosphoheptose isomerase (200 aa).

In terms of domain architecture, SIS spans 37–199; the sequence is VLGCITAGGK…DVQLLGEQDL (163 aa). Residue 52-54 coordinates substrate; it reads NGG. Positions 61 and 65 each coordinate Zn(2+). Residues glutamate 65, 94–95, 120–122, serine 125, and glutamine 175 contribute to the substrate site; these read ND and TTS. Zn(2+)-binding residues include glutamine 175 and histidine 183.

It belongs to the SIS family. GmhA subfamily. In terms of assembly, homotetramer. Requires Zn(2+) as cofactor.

Its subcellular location is the cytoplasm. It catalyses the reaction 2 D-sedoheptulose 7-phosphate = D-glycero-alpha-D-manno-heptose 7-phosphate + D-glycero-beta-D-manno-heptose 7-phosphate. The protein operates within carbohydrate biosynthesis; D-glycero-D-manno-heptose 7-phosphate biosynthesis; D-glycero-alpha-D-manno-heptose 7-phosphate and D-glycero-beta-D-manno-heptose 7-phosphate from sedoheptulose 7-phosphate: step 1/1. Its function is as follows. Catalyzes the isomerization of sedoheptulose 7-phosphate in D-glycero-D-manno-heptose 7-phosphate. This chain is Phosphoheptose isomerase, found in Methylibium petroleiphilum (strain ATCC BAA-1232 / LMG 22953 / PM1).